A 291-amino-acid chain; its full sequence is Phytanoyl-CoA dioxygenase domain-containing protein 1 (291 aa).

Thr-55 is modified (phosphothreonine). 2-oxoglutarate is bound by residues Lys-102, Met-141, 156–158 (HQD), and Trp-174. His-156 and Asp-158 together coordinate Fe cation. Fe cation is bound at residue His-246. Residues Ser-248 and Arg-257 each contribute to the 2-oxoglutarate site.

The protein belongs to the PhyH family. PHYHD1 subfamily. Requires Fe cation as cofactor.

With respect to regulation, activity is increased by ascorbate. Inhibited by myristoyl-CoA. In terms of biological role, 2-oxoglutarate(2OG)-dependent dioxygenase that catalyzes the conversion of 2-oxoglutarate to succinate and CO(2) in an iron-dependent manner. However, does not couple 2OG turnover to the hydroxylation of acyl-coenzyme A derivatives, implying that it is not directly involved in phytanoyl coenzyme-A metabolism. Does not show detectable activity towards fatty acid CoA thioesters. Functionally, isoform 2 probably lacks enzyme activity. Isoform 3 probably lacks enzyme activity. This is Phytanoyl-CoA dioxygenase domain-containing protein 1 from Homo sapiens (Human).